The chain runs to 419 residues: UDP-N-acetylglucosamine 1-carboxyvinyltransferase 2 (419 aa).

22 to 23 (KN) serves as a coordination point for phosphoenolpyruvate. A UDP-N-acetyl-alpha-D-glucosamine-binding site is contributed by R92. The active-site Proton donor is the C116. At C116 the chain carries 2-(S-cysteinyl)pyruvic acid O-phosphothioketal. UDP-N-acetyl-alpha-D-glucosamine is bound by residues 121–125 (RPIDL), D306, and I328.

The protein belongs to the EPSP synthase family. MurA subfamily.

It is found in the cytoplasm. The enzyme catalyses phosphoenolpyruvate + UDP-N-acetyl-alpha-D-glucosamine = UDP-N-acetyl-3-O-(1-carboxyvinyl)-alpha-D-glucosamine + phosphate. It participates in cell wall biogenesis; peptidoglycan biosynthesis. Its function is as follows. Cell wall formation. Adds enolpyruvyl to UDP-N-acetylglucosamine. The sequence is that of UDP-N-acetylglucosamine 1-carboxyvinyltransferase 2 from Streptococcus pyogenes serotype M1.